Reading from the N-terminus, the 911-residue chain is Eukaryotic translation initiation factor 3 subunit C (911 aa).

Disordered regions lie at residues 1 to 38 and 155 to 181; these read MSRF…DDEE and SRFR…GEAA. Acidic residues predominate over residues 11–20; the sequence is SESESSEEEV. The segment covering 23 to 32 has biased composition (polar residues); sequence PNFNKASAFQ. A phosphoserine mark is found at Ser34, Ser165, Ser175, and Ser184. A compositionally biased stretch (acidic residues) spans 162–171; sequence DQESEAEDEE. The span at 196–208 shows a compositional bias: low complexity; the sequence is APKIAKSAPAKSV. Positions 196–284 are disordered; it reads APKIAKSAPA…KRAEDDEDGE (89 aa). Residues 210–236 show a composition bias toward acidic residues; the sequence is ADDEDSDDSIDWDSDSESETESSEDEN. Basic and acidic residues predominate over residues 241–271; that stretch reads MRERFLKRSTEKGEDKGDDDKRKDKRKEQKL. The region spanning 642 to 818 is the PCI domain; that stretch reads FHMHINLELL…ETVVMHRSEP (177 aa). Residues 851–911 are disordered; it reads FQRGNMGNRG…QQQVQTIDEE (61 aa). Basic residues predominate over residues 885-896; that stretch reads QRNRNQRGHHKN. A compositionally biased stretch (low complexity) spans 897-911; the sequence is QQQQQQQQVQTIDEE.

This sequence belongs to the eIF-3 subunit C family. In terms of assembly, component of the eukaryotic translation initiation factor 3 (eIF-3) complex. The eIF-3 complex interacts with pix.

The protein resides in the cytoplasm. Component of the eukaryotic translation initiation factor 3 (eIF-3) complex, which is involved in protein synthesis of a specialized repertoire of mRNAs and, together with other initiation factors, stimulates binding of mRNA and methionyl-tRNAi to the 40S ribosome. The eIF-3 complex specifically targets and initiates translation of a subset of mRNAs involved in cell proliferation. This Drosophila pseudoobscura pseudoobscura (Fruit fly) protein is Eukaryotic translation initiation factor 3 subunit C.